Reading from the N-terminus, the 256-residue chain is Nuclear shuttle protein (256 aa).

Positions 21-42 (HSTGKRSRNVSRIDFKRRSSKY) match the Bipartite nuclear localization signal motif. The Nuclear localization signal signature appears at 81–96 (SLGKTEPSRSRSYIKL). Residues 150 to 187 (ELFGARIHSHGNLAVSSALKDRFYIRHVFKRVISVEKD) are interaction with Arabidopsis thaliana NSI protein.

The protein belongs to the begomovirus nuclear shuttle protein family. As to quaternary structure, binds to single-stranded and double-stranded viral DNA. Interacts with the host nuclear shuttle interacting (NSI) protein. This interaction may allow NSP to recruit NSI monomers to the viral genome and thus regulate nuclear export of viral genome by NSP.

It is found in the host nucleus. It localises to the host cytoplasm. Its subcellular location is the host cell membrane. Its function is as follows. Binds to the genomic viral ssDNA, shuttles it into and out of the cell nucleus. Begomoviruses use 2 proteins to transport their DNA from cell to cell. The nuclear shuttle protein (NSP) shuttles it between nucleus and cytoplasm and the movement protein (MP) probably transports the DNA-NSP complex to the cell periphery and facilitates movement across the cell wall. The polypeptide is Nuclear shuttle protein (Solanum lycopersicum (Tomato)).